A 207-amino-acid chain; its full sequence is 2,3-bisphosphoglycerate-dependent phosphoglycerate mutase (207 aa).

Substrate is bound by residues 10–17, 23–24, Arg-62, 89–92, Lys-100, 116–117, and 160–161; these read RHGQSEWN, TG, ERDY, RR, and GN. Catalysis depends on His-11, which acts as the Tele-phosphohistidine intermediate. Catalysis depends on Glu-89, which acts as the Proton donor/acceptor.

It belongs to the phosphoglycerate mutase family. BPG-dependent PGAM subfamily. In terms of assembly, homodimer.

The catalysed reaction is (2R)-2-phosphoglycerate = (2R)-3-phosphoglycerate. The protein operates within carbohydrate degradation; glycolysis; pyruvate from D-glyceraldehyde 3-phosphate: step 3/5. Its function is as follows. Catalyzes the interconversion of 2-phosphoglycerate and 3-phosphoglycerate. The protein is 2,3-bisphosphoglycerate-dependent phosphoglycerate mutase of Xanthobacter autotrophicus (strain ATCC BAA-1158 / Py2).